We begin with the raw amino-acid sequence, 333 residues long: Glycogenin-1 (333 aa).

Residue T2 is modified to N-acetylthreonine. Positions 9, 11, 12, and 15 each coordinate UDP. The UDP-alpha-D-glucose site is built by L9, T11, N12, and Y15. S44 bears the Phosphoserine mark. R77 is a UDP binding site. UDP-alpha-D-glucose-binding residues include R77, K86, D102, A103, D104, N133, S134, D160, D163, and Q164. 3 residues coordinate UDP: D102, A103, and D104. D102 is a binding site for Mn(2+). A Mn(2+)-binding site is contributed by D104. Residue Y195 is glycosylated (O-linked (Glc...) tyrosine). UDP is bound by residues H212, G215, and K218. H212 serves as a coordination point for Mn(2+). The UDP-alpha-D-glucose site is built by G215 and K218. Positions 284–316 are interaction with GYS1; it reads SDLSFGEAPAAPQPSMSSEERKERWEQGQADYM. Residues 290-316 form a disordered region; that stretch reads EAPAAPQPSMSSEERKERWEQGQADYM.

The protein belongs to the glycosyltransferase 8 family. Glycogenin subfamily. As to quaternary structure, part of the GYS1-GYG1 complex, a heterooctamer composed of a tetramer of GYS1 and 2 dimers of GYG1, where each GYS1 protomer binds to one GYG1 subunit (via GYG1 C-terminus); the GYS1 tetramer may dissociate from GYG1 dimers to continue glycogen polymerization on its own. May also form a heterooctamer complex with GYS2. Mn(2+) is required as a cofactor. In terms of processing, self-glycosylated by the transfer of glucose residues from UDP-glucose to itself, forming an alpha-1,4-glycan of around 10 residues attached to Tyr-195. Phosphorylated. As to expression, skeletal muscle, heart, to a lesser extent in kidney, lung and brain.

It is found in the cytoplasm. It localises to the nucleus. It catalyses the reaction L-tyrosyl-[glycogenin] + UDP-alpha-D-glucose = alpha-D-glucosyl-L-tyrosyl-[glycogenin] + UDP + H(+). The enzyme catalyses [1,4-alpha-D-glucosyl](n)-L-tyrosyl-[glycogenin] + UDP-alpha-D-glucose = [1,4-alpha-D-glucosyl](n+1)-L-tyrosyl-[glycogenin] + UDP + H(+). The protein operates within glycan biosynthesis; glycogen biosynthesis. Functionally, glycogenin participates in the glycogen biosynthetic process along with glycogen synthase and glycogen branching enzyme. It catalyzes the formation of a short alpha (1,4)-glucosyl chain covalently attached via a glucose 1-O-tyrosyl linkage to internal tyrosine residues and these chains act as primers for the elongation reaction catalyzed by glycogen synthase. The polypeptide is Glycogenin-1 (Mus musculus (Mouse)).